A 390-amino-acid polypeptide reads, in one-letter code: MAFDLAARLAERRAADLYRQRPLLESPQGPEVVVDGQRLLAFCSNDYLGLANHPEVISAWQAGAERWGVGGGASHLVVGHSTPHHQVEEALAELTGRPRALLFSTGYMANLGAITALVGQGDTVLQDRLNHASLLDGGLLSGARFNRYLHNDSASLASRLDKAVGNTLVVTDGVFSMDGDLADLPALADVARGRGAWLMVDDAHGLGTLGAQGGGIVEHFGLGVADVPVLIGTLGKACGTAGAFVAGSEDLIEALVQFARPYIYTTSQPPALACATLKSLELLRRETWRREHLAALIRQFREGAQQIGLQLMDSPTPIQPIVIGDSAQALRLSRMLRERGLLVTAIRPPTVPAGSARLRVTLSAAHSEAQVQLLLNALAECYPQLENADA.

Residue arginine 19 coordinates substrate. Glycine 106 to tyrosine 107 lines the pyridoxal 5'-phosphate pocket. Histidine 131 lines the substrate pocket. Residues serine 176, histidine 204, and threonine 233 each coordinate pyridoxal 5'-phosphate. N6-(pyridoxal phosphate)lysine is present on lysine 236. Threonine 350 serves as a coordination point for substrate.

Belongs to the class-II pyridoxal-phosphate-dependent aminotransferase family. BioF subfamily. In terms of assembly, homodimer. Pyridoxal 5'-phosphate serves as cofactor.

The enzyme catalyses 6-carboxyhexanoyl-[ACP] + L-alanine + H(+) = (8S)-8-amino-7-oxononanoate + holo-[ACP] + CO2. The protein operates within cofactor biosynthesis; biotin biosynthesis. In terms of biological role, catalyzes the decarboxylative condensation of pimeloyl-[acyl-carrier protein] and L-alanine to produce 8-amino-7-oxononanoate (AON), [acyl-carrier protein], and carbon dioxide. In Pseudomonas putida (strain GB-1), this protein is 8-amino-7-oxononanoate synthase.